We begin with the raw amino-acid sequence, 304 residues long: Acetyl-coenzyme A carboxylase carboxyl transferase subunit beta (304 aa).

The CoA carboxyltransferase N-terminal domain maps to 23–292; that stretch reads VWTKCDSCGQ…PNPDAPREGV (270 aa). Positions 27, 30, 46, and 49 each coordinate Zn(2+). The segment at 27 to 49 adopts a C4-type zinc-finger fold; the sequence is CDSCGQVLYRAELERNLEVCPKC. Residues 284–304 form a disordered region; it reads NPDAPREGVVVPPAPGQESEA.

It belongs to the AccD/PCCB family. As to quaternary structure, acetyl-CoA carboxylase is a heterohexamer composed of biotin carboxyl carrier protein (AccB), biotin carboxylase (AccC) and two subunits each of ACCase subunit alpha (AccA) and ACCase subunit beta (AccD). Zn(2+) serves as cofactor.

It localises to the cytoplasm. It carries out the reaction N(6)-carboxybiotinyl-L-lysyl-[protein] + acetyl-CoA = N(6)-biotinyl-L-lysyl-[protein] + malonyl-CoA. It participates in lipid metabolism; malonyl-CoA biosynthesis; malonyl-CoA from acetyl-CoA: step 1/1. Its function is as follows. Component of the acetyl coenzyme A carboxylase (ACC) complex. Biotin carboxylase (BC) catalyzes the carboxylation of biotin on its carrier protein (BCCP) and then the CO(2) group is transferred by the transcarboxylase to acetyl-CoA to form malonyl-CoA. This Salmonella arizonae (strain ATCC BAA-731 / CDC346-86 / RSK2980) protein is Acetyl-coenzyme A carboxylase carboxyl transferase subunit beta.